The following is a 134-amino-acid chain: Small ribosomal subunit protein uS8c (134 aa).

Belongs to the universal ribosomal protein uS8 family. In terms of assembly, part of the 30S ribosomal subunit.

The protein resides in the plastid. It localises to the chloroplast. One of the primary rRNA binding proteins, it binds directly to 16S rRNA central domain where it helps coordinate assembly of the platform of the 30S subunit. In Helianthus annuus (Common sunflower), this protein is Small ribosomal subunit protein uS8c (rps8).